The chain runs to 444 residues: Phosphomethylpyrimidine synthase (444 aa).

Residues Asn-80, Met-109, Tyr-138, His-174, 194-196 (SRG), 235-238 (DSLR), and Glu-274 each bind substrate. His-278 contacts Zn(2+). Residue Tyr-301 participates in substrate binding. His-342 is a binding site for Zn(2+). [4Fe-4S] cluster contacts are provided by Cys-422, Cys-425, and Cys-430.

The protein belongs to the ThiC family. In terms of assembly, homodimer. It depends on [4Fe-4S] cluster as a cofactor.

The catalysed reaction is 5-amino-1-(5-phospho-beta-D-ribosyl)imidazole + S-adenosyl-L-methionine = 4-amino-2-methyl-5-(phosphooxymethyl)pyrimidine + CO + 5'-deoxyadenosine + formate + L-methionine + 3 H(+). Its pathway is cofactor biosynthesis; thiamine diphosphate biosynthesis. Catalyzes the synthesis of the hydroxymethylpyrimidine phosphate (HMP-P) moiety of thiamine from aminoimidazole ribotide (AIR) in a radical S-adenosyl-L-methionine (SAM)-dependent reaction. The polypeptide is Phosphomethylpyrimidine synthase (Nitratiruptor sp. (strain SB155-2)).